The following is a 476-amino-acid chain: Bifunctional protein HldE (476 aa).

The tract at residues 1 to 318 is ribokinase; it reads MKVTLPDFRR…ENAIRGRAET (318 aa). Residue 195–198 participates in ATP binding; the sequence is NLSE. D264 is a catalytic residue. Positions 344-476 are cytidylyltransferase; the sequence is MTNGIFDILH…IIQSIKNGRG (133 aa).

This sequence in the N-terminal section; belongs to the carbohydrate kinase PfkB family. In the C-terminal section; belongs to the cytidylyltransferase family. In terms of assembly, homodimer.

It carries out the reaction D-glycero-beta-D-manno-heptose 7-phosphate + ATP = D-glycero-beta-D-manno-heptose 1,7-bisphosphate + ADP + H(+). It catalyses the reaction D-glycero-beta-D-manno-heptose 1-phosphate + ATP + H(+) = ADP-D-glycero-beta-D-manno-heptose + diphosphate. It functions in the pathway nucleotide-sugar biosynthesis; ADP-L-glycero-beta-D-manno-heptose biosynthesis; ADP-L-glycero-beta-D-manno-heptose from D-glycero-beta-D-manno-heptose 7-phosphate: step 1/4. It participates in nucleotide-sugar biosynthesis; ADP-L-glycero-beta-D-manno-heptose biosynthesis; ADP-L-glycero-beta-D-manno-heptose from D-glycero-beta-D-manno-heptose 7-phosphate: step 3/4. Its function is as follows. Catalyzes the phosphorylation of D-glycero-D-manno-heptose 7-phosphate at the C-1 position to selectively form D-glycero-beta-D-manno-heptose-1,7-bisphosphate. In terms of biological role, catalyzes the ADP transfer from ATP to D-glycero-beta-D-manno-heptose 1-phosphate, yielding ADP-D-glycero-beta-D-manno-heptose. The chain is Bifunctional protein HldE from Yersinia pseudotuberculosis serotype O:1b (strain IP 31758).